We begin with the raw amino-acid sequence, 114 residues long: Amphinase-4 (114 aa).

The active-site Proton acceptor is the His-15. Cystine bridges form between Cys-26/Cys-79, Cys-41/Cys-85, Cys-59/Cys-100, and Cys-97/Cys-114. A glycan (N-linked (GlcNAc...) asparagine) is linked at Asn-27. 42–46 provides a ligand contact to substrate; the sequence is KPVNT. Asn-67 and Asn-91 each carry an N-linked (GlcNAc...) asparagine glycan. The active-site Proton donor is His-107.

This sequence belongs to the pancreatic ribonuclease family. As to quaternary structure, monomer. There are at least five different forms arising from glycan heterogeneity.

The protein localises to the secreted. Functionally, endonuclease, hydrolyzes highly polymerized RNA, poly(U) and poly(C), and the dinucleotides CpA and UpA. Hydrolyzes rCA, rUA and rUG. Has cytotoxic activity against cultured human submaxillary gland carcinoma cells. The chain is Amphinase-4 from Lithobates pipiens (Northern leopard frog).